We begin with the raw amino-acid sequence, 217 residues long: Ras-related protein RABA2d (217 aa).

19–26 (GDSGVGKT) contacts GTP. Residues 41 to 49 (SKSTIGVEF) carry the Effector region motif. Residues 67-71 (DTAGQ), 125-128 (NKAD), and 155-156 (SA) contribute to the GTP site. Residues 196–217 (GQGTTINVEDTSGAGKRGCCST) form a disordered region. Residues C214 and C215 are each lipidated (S-geranylgeranyl cysteine).

The protein belongs to the small GTPase superfamily. Rab family. As to expression, expressed in root tips.

It is found in the endosome membrane. Its subcellular location is the golgi apparatus. The protein resides in the trans-Golgi network membrane. Intracellular vesicle trafficking and protein transport. This chain is Ras-related protein RABA2d (RABA2D), found in Arabidopsis thaliana (Mouse-ear cress).